The chain runs to 303 residues: UDP-N-acetylenolpyruvoylglucosamine reductase (303 aa).

Residues lysine 29–lysine 196 enclose the FAD-binding PCMH-type domain. The active site involves arginine 174. Serine 225 serves as the catalytic Proton donor. Glutamate 295 is an active-site residue.

The protein belongs to the MurB family. FAD serves as cofactor.

Its subcellular location is the cytoplasm. The enzyme catalyses UDP-N-acetyl-alpha-D-muramate + NADP(+) = UDP-N-acetyl-3-O-(1-carboxyvinyl)-alpha-D-glucosamine + NADPH + H(+). The protein operates within cell wall biogenesis; peptidoglycan biosynthesis. Its function is as follows. Cell wall formation. The chain is UDP-N-acetylenolpyruvoylglucosamine reductase from Bacillus licheniformis (strain ATCC 14580 / DSM 13 / JCM 2505 / CCUG 7422 / NBRC 12200 / NCIMB 9375 / NCTC 10341 / NRRL NRS-1264 / Gibson 46).